The sequence spans 139 residues: Holo-[acyl-carrier-protein] synthase (139 aa).

Mg(2+) contacts are provided by Asp8 and Glu57.

The protein belongs to the P-Pant transferase superfamily. AcpS family. Mg(2+) is required as a cofactor.

The protein localises to the cytoplasm. It catalyses the reaction apo-[ACP] + CoA = holo-[ACP] + adenosine 3',5'-bisphosphate + H(+). Its function is as follows. Transfers the 4'-phosphopantetheine moiety from coenzyme A to a Ser of acyl-carrier-protein. The protein is Holo-[acyl-carrier-protein] synthase of Dinoroseobacter shibae (strain DSM 16493 / NCIMB 14021 / DFL 12).